We begin with the raw amino-acid sequence, 80 residues long: Putative membrane protein insertion efficiency factor (80 aa).

Positions 61–80 (KTGKDPVPDHFSLKRNQEGE) are disordered. The span at 62 to 80 (TGKDPVPDHFSLKRNQEGE) shows a compositional bias: basic and acidic residues.

It belongs to the UPF0161 family.

The protein localises to the cell membrane. In terms of biological role, could be involved in insertion of integral membrane proteins into the membrane. The polypeptide is Putative membrane protein insertion efficiency factor (Streptococcus pneumoniae serotype 2 (strain D39 / NCTC 7466)).